The primary structure comprises 107 residues: Cell cycle protein GpsB (107 aa).

Positions 32-65 form a coiled coil; that stretch reads LDNVIQDYETYISEIEELKAEIERLKNQNTHPKS. The interval 57 to 80 is disordered; sequence KNQNTHPKSPSTENRHAMVQPTRV. The span at 58–68 shows a compositional bias: polar residues; the sequence is NQNTHPKSPST.

This sequence belongs to the GpsB family. In terms of assembly, forms polymers through the coiled coil domains. Interacts with PBP1, MreC and EzrA.

Its subcellular location is the cytoplasm. Divisome component that associates with the complex late in its assembly, after the Z-ring is formed, and is dependent on DivIC and PBP2B for its recruitment to the divisome. Together with EzrA, is a key component of the system that regulates PBP1 localization during cell cycle progression. Its main role could be the removal of PBP1 from the cell pole after pole maturation is completed. Also contributes to the recruitment of PBP1 to the division complex. Not essential for septum formation. The protein is Cell cycle protein GpsB of Streptococcus uberis (strain ATCC BAA-854 / 0140J).